A 142-amino-acid polypeptide reads, in one-letter code: Large ribosomal subunit protein mL42 (142 aa).

The N-terminal 32 residues, 1-32 (MALAAVKWAISSRTMLKHLFPVENGALYCVGH), are a transit peptide targeting the mitochondrion.

The protein belongs to the mitochondrion-specific ribosomal protein mL42 family. As to quaternary structure, component of the mitochondrial ribosome large subunit (39S) which comprises a 16S rRNA and about 50 distinct proteins. Component of the mitochondrial ribosome small subunit (28S) which comprises a 12S rRNA and about 30 distinct proteins.

The protein localises to the mitochondrion. The polypeptide is Large ribosomal subunit protein mL42 (MRPL42) (Bos taurus (Bovine)).